A 221-amino-acid chain; its full sequence is GFP-like non-fluorescent chromoprotein (221 aa).

The 2-iminomethyl-5-imidazolinone (Gln-Gly) cross-link spans 62–64 (QYG). 2,3-didehydrotyrosine is present on Tyr-63.

This sequence belongs to the GFP family. In terms of assembly, homotetramer. In terms of processing, contains a chromophore consisting of modified amino acid residues. The chromophore is formed by autocatalytic backbone condensation between Xaa-N and Gly-(N+2), oxidation of Tyr-(N+1) to didehydrotyrosine, and formation of a double bond to the alpha-amino nitrogen of residue Xaa-N. Maturation of the chromophore requires nothing other than molecular oxygen. The precise stereochemistry of the tyrosine has not been determined.

Non-fluorescent pigment protein that is lilac in color. The sequence is that of GFP-like non-fluorescent chromoprotein from Goniopora tenuidens (Anemone coral).